We begin with the raw amino-acid sequence, 218 residues long: Phosphoenolpyruvate guanylyltransferase (218 aa).

Residues threonine 151, glycine 166, and serine 169 each contribute to the phosphoenolpyruvate site.

The protein belongs to the CofC family.

It carries out the reaction phosphoenolpyruvate + GTP + H(+) = enolpyruvoyl-2-diphospho-5'-guanosine + diphosphate. Its pathway is cofactor biosynthesis; coenzyme F420 biosynthesis. Guanylyltransferase that catalyzes the activation of phosphoenolpyruvate (PEP) as enolpyruvoyl-2-diphospho-5'-guanosine, via the condensation of PEP with GTP. It is involved in the biosynthesis of coenzyme F420, a hydride carrier cofactor. The sequence is that of Phosphoenolpyruvate guanylyltransferase from Mycobacterium sp. (strain KMS).